The sequence spans 403 residues: Alkaline protease 1 (403 aa).

The N-terminal stretch at 1–21 (MHSFKRSLLLLGALLPAVFGA) is a signal peptide. A propeptide spanning residues 22 to 124 (PVEPRRAAEK…QIWYIDALTS (103 aa)) is cleaved from the precursor. One can recognise an Inhibitor I9 domain in the interval 35–119 (KYIVTFKSGL…HVEEDQIWYI (85 aa)). A Peptidase S8 domain is found at 129-403 (PWGLGAISHK…NLLAYNGADE (275 aa)). Residues aspartate 161 and histidine 192 each act as charge relay system in the active site. Asparagine 252 carries an N-linked (GlcNAc...) asparagine glycan. The active-site Charge relay system is serine 348.

It belongs to the peptidase S8 family.

Its subcellular location is the secreted. The catalysed reaction is Hydrolysis of proteins with broad specificity, and of Bz-Arg-OEt &gt; Ac-Tyr-OEt. Does not hydrolyze peptide amides.. Functionally, secreted alkaline protease that allows assimilation of proteinaceous substrates. In Emericella nidulans (strain FGSC A4 / ATCC 38163 / CBS 112.46 / NRRL 194 / M139) (Aspergillus nidulans), this protein is Alkaline protease 1 (alp1).